A 397-amino-acid polypeptide reads, in one-letter code: Acetate kinase (397 aa).

N8 contributes to the Mg(2+) binding site. Residue K15 participates in ATP binding. R89 contacts substrate. D146 serves as the catalytic Proton donor/acceptor. ATP-binding positions include H206 to G210, D280 to R282, and G328 to N332. E382 is a binding site for Mg(2+).

It belongs to the acetokinase family. Homodimer. Mg(2+) is required as a cofactor. The cofactor is Mn(2+).

The protein resides in the cytoplasm. The catalysed reaction is acetate + ATP = acetyl phosphate + ADP. The protein operates within metabolic intermediate biosynthesis; acetyl-CoA biosynthesis; acetyl-CoA from acetate: step 1/2. In terms of biological role, catalyzes the formation of acetyl phosphate from acetate and ATP. Can also catalyze the reverse reaction. This chain is Acetate kinase, found in Leifsonia xyli subsp. xyli (strain CTCB07).